The following is a 444-amino-acid chain: Acetyl-CoA--deacetylcephalosporin C acetyltransferase (444 aa).

Residues methionine 1–serine 71 constitute a propeptide that is removed on maturation. An AB hydrolase-1 domain is found at valine 112 to valine 425. Catalysis depends on residues serine 208 and histidine 421.

It belongs to the AB hydrolase superfamily. MetX family. As to quaternary structure, heterodimer of chain I and chain II.

The enzyme catalyses deacetylcephalosporin C + acetyl-CoA = cephalosporin C + CoA. It participates in antibiotic biosynthesis; cephalosporin C biosynthesis. Its function is as follows. Catalyzes the conversion of deacetylcephalosporin C to cephalosporin C. The protein is Acetyl-CoA--deacetylcephalosporin C acetyltransferase (CEFG) of Hapsidospora chrysogena (Acremonium chrysogenum).